The chain runs to 286 residues: Non-homologous end joining protein Ku (286 aa).

The 166-residue stretch at 10–175 (TVGLVSFPVR…EEVREPDFVV (166 aa)) folds into the Ku domain. Residues 226–242 (ERQERQRREAGEVRQAD) show a composition bias toward basic and acidic residues. A disordered region spans residues 226–270 (ERQERQRREAGEVRQADETDEAAETEVPEVDIPASRAPGETGGEL). Over residues 243 to 254 (ETDEAAETEVPE) the composition is skewed to acidic residues.

The protein belongs to the prokaryotic Ku family. Homodimer. Interacts with LigD.

In terms of biological role, with LigD forms a non-homologous end joining (NHEJ) DNA repair enzyme, which repairs dsDNA breaks with reduced fidelity. Binds linear dsDNA with 5'- and 3'- overhangs but not closed circular dsDNA nor ssDNA. Recruits and stimulates the ligase activity of LigD. The polypeptide is Non-homologous end joining protein Ku (Actinosynnema mirum (strain ATCC 29888 / DSM 43827 / JCM 3225 / NBRC 14064 / NCIMB 13271 / NRRL B-12336 / IMRU 3971 / 101)).